Consider the following 1040-residue polypeptide: Multidrug resistance protein MdtB (1040 aa).

A run of 12 helical transmembrane segments spans residues 16-36 (FIMR…AGII), 347-367 (LMMA…NIPA), 369-389 (IIPG…MVFL), 396-416 (LTLM…IVVI), 440-460 (IGFT…PLLF), 472-492 (FAIT…TLTP), 537-557 (WLTL…WVFI), 863-883 (LGST…VLGI), 888-908 (FIHP…ALLA), 911-931 (IAGS…IGIV), 968-988 (ILMT…STGV), and 998-1018 (IGMV…TPVI).

This sequence belongs to the resistance-nodulation-cell division (RND) (TC 2.A.6) family. MdtB subfamily. As to quaternary structure, part of a tripartite efflux system composed of MdtA, MdtB and MdtC. MdtB forms a heteromultimer with MdtC.

The protein localises to the cell inner membrane. The MdtABC tripartite complex confers resistance against novobiocin and deoxycholate. This is Multidrug resistance protein MdtB from Escherichia coli (strain K12 / MC4100 / BW2952).